The chain runs to 173 residues: Large ribosomal subunit protein uL10 (173 aa).

The protein belongs to the universal ribosomal protein uL10 family. Part of the ribosomal stalk of the 50S ribosomal subunit. The N-terminus interacts with L11 and the large rRNA to form the base of the stalk. The C-terminus forms an elongated spine to which L12 dimers bind in a sequential fashion forming a multimeric L10(L12)X complex.

Forms part of the ribosomal stalk, playing a central role in the interaction of the ribosome with GTP-bound translation factors. In Nitratidesulfovibrio vulgaris (strain ATCC 29579 / DSM 644 / CCUG 34227 / NCIMB 8303 / VKM B-1760 / Hildenborough) (Desulfovibrio vulgaris), this protein is Large ribosomal subunit protein uL10.